Reading from the N-terminus, the 679-residue chain is Cysteine-rich receptor-like protein kinase 29 (679 aa).

The signal sequence occupies residues 1 to 23; sequence MEHVRVIFFFACFLTLAPFHAFA. The Extracellular portion of the chain corresponds to 24 to 286; sequence QVDSYEFDPD…RTGKGKGGSK (263 aa). Gnk2-homologous domains are found at residues 30–134 and 140–249; these read FDPD…NRTI and TNPT…TWRF. N41, N45, N71, N107, N131, and N187 each carry an N-linked (GlcNAc...) asparagine glycan. Residues 260 to 281 are disordered; it reads PPAIQPADSPQSAARTERTGKG. Residues 287-307 traverse the membrane as a helical segment; the sequence is VIIAIVIPILLVALLAICLCL. Topologically, residues 308-679 are cytoplasmic; sequence VLKWRKNKSG…DVTVSEFSPR (372 aa). A Protein kinase domain is found at 357 to 637; sequence FSSENELGRG…SLMLNSYSFT (281 aa). ATP is bound by residues 363 to 371 and K385; that span reads LGRGGFGSV. Y430 is modified (phosphotyrosine). The active-site Proton acceptor is the D482. Phosphoserine is present on S486. The residue at position 524 (T524) is a Phosphothreonine. Residue Y532 is modified to Phosphotyrosine. The disordered stretch occupies residues 659-679; sequence SSTEGLQMSSNDVTVSEFSPR.

It belongs to the protein kinase superfamily. Ser/Thr protein kinase family. CRK subfamily.

Its subcellular location is the membrane. It carries out the reaction L-seryl-[protein] + ATP = O-phospho-L-seryl-[protein] + ADP + H(+). The catalysed reaction is L-threonyl-[protein] + ATP = O-phospho-L-threonyl-[protein] + ADP + H(+). This chain is Cysteine-rich receptor-like protein kinase 29 (CRK29), found in Arabidopsis thaliana (Mouse-ear cress).